Consider the following 489-residue polypeptide: Glycogen synthase (489 aa).

Lys-18 is an ADP-alpha-D-glucose binding site.

Belongs to the glycosyltransferase 1 family. Bacterial/plant glycogen synthase subfamily.

It catalyses the reaction [(1-&gt;4)-alpha-D-glucosyl](n) + ADP-alpha-D-glucose = [(1-&gt;4)-alpha-D-glucosyl](n+1) + ADP + H(+). The protein operates within glycan biosynthesis; glycogen biosynthesis. In terms of biological role, synthesizes alpha-1,4-glucan chains using ADP-glucose. This chain is Glycogen synthase, found in Rhodopseudomonas palustris (strain BisA53).